A 187-amino-acid chain; its full sequence is Flavin prenyltransferase UbiX (187 aa).

FMN is bound by residues 9 to 11 (GAS), Ser34, and Arg123. 2 residues coordinate dimethylallyl phosphate: Tyr153 and Lys169.

The protein belongs to the UbiX/PAD1 family.

It catalyses the reaction dimethylallyl phosphate + FMNH2 = prenylated FMNH2 + phosphate. Flavin prenyltransferase that catalyzes the synthesis of the prenylated FMN cofactor (prenyl-FMN) for 4-hydroxy-3-polyprenylbenzoic acid decarboxylase UbiD. The prenyltransferase is metal-independent and links a dimethylallyl moiety from dimethylallyl monophosphate (DMAP) to the flavin N5 and C6 atoms of FMN. This is Flavin prenyltransferase UbiX from Helicobacter pylori (strain ATCC 700392 / 26695) (Campylobacter pylori).